Here is a 118-residue protein sequence, read N- to C-terminus: Large ribosomal subunit protein uL22 (118 aa).

Belongs to the universal ribosomal protein uL22 family. Part of the 50S ribosomal subunit.

This protein binds specifically to 23S rRNA; its binding is stimulated by other ribosomal proteins, e.g. L4, L17, and L20. It is important during the early stages of 50S assembly. It makes multiple contacts with different domains of the 23S rRNA in the assembled 50S subunit and ribosome. Its function is as follows. The globular domain of the protein is located near the polypeptide exit tunnel on the outside of the subunit, while an extended beta-hairpin is found that lines the wall of the exit tunnel in the center of the 70S ribosome. This is Large ribosomal subunit protein uL22 from Synechococcus sp. (strain RCC307).